Here is a 395-residue protein sequence, read N- to C-terminus: Elongation factor Tu (395 aa).

The tr-type G domain occupies 10–205 (KPHVNIGTIG…VDNWIPIPPR (196 aa)). Residues 19 to 26 (GHVDHGKT) form a G1 region. 19 to 26 (GHVDHGKT) provides a ligand contact to GTP. Position 26 (Thr26) interacts with Mg(2+). Residues 60-64 (GITIN) are G2. The tract at residues 81-84 (DCPG) is G3. Residues 81 to 85 (DCPGH) and 136 to 139 (NKVD) contribute to the GTP site. A G4 region spans residues 136–139 (NKVD). The segment at 174 to 176 (SAL) is G5.

This sequence belongs to the TRAFAC class translation factor GTPase superfamily. Classic translation factor GTPase family. EF-Tu/EF-1A subfamily. In terms of assembly, monomer.

The protein resides in the cytoplasm. The enzyme catalyses GTP + H2O = GDP + phosphate + H(+). GTP hydrolase that promotes the GTP-dependent binding of aminoacyl-tRNA to the A-site of ribosomes during protein biosynthesis. This Hymenobacter ocellatus (Parahymenobacter ocellatus) protein is Elongation factor Tu.